The sequence spans 397 residues: Ribosomal RNA large subunit methyltransferase I (397 aa).

The PUA domain maps to 2-82 (TTSIYLVKGR…EVINVDFFVK (81 aa)).

Belongs to the methyltransferase superfamily. RlmI family.

The protein localises to the cytoplasm. It carries out the reaction cytidine(1962) in 23S rRNA + S-adenosyl-L-methionine = 5-methylcytidine(1962) in 23S rRNA + S-adenosyl-L-homocysteine + H(+). Specifically methylates the cytosine at position 1962 (m5C1962) of 23S rRNA. In Photobacterium profundum (strain SS9), this protein is Ribosomal RNA large subunit methyltransferase I.